The chain runs to 333 residues: HTH-type transcriptional repressor PurR (333 aa).

The HTH lacI-type domain occupies 2-56 (ATIKDVAKLASVSTTTVSHVINKTRFVAEATQKRVWEAVEELNYAPSAVARSLKC). Positions 4–23 (IKDVAKLASVSTTTVSHVIN) form a DNA-binding region, H-T-H motif. The DNA-binding element occupies 48 to 56 (SAVARSLKC). The hypoxanthine site is built by F73, K189, T191, F220, and D274.

In terms of assembly, homodimer.

Its pathway is purine metabolism; purine nucleotide biosynthesis [regulation]. Its function is as follows. Is the main repressor of the genes involved in the de novo synthesis of purine nucleotides, regulating purB, purC, purEK, purF, purHD, purL, purMN and guaBA expression. PurR is allosterically activated to bind its cognate DNA by binding the purine corepressors, hypoxanthine or guanine, thereby effecting transcription repression. The sequence is that of HTH-type transcriptional repressor PurR from Aliivibrio salmonicida (strain LFI1238) (Vibrio salmonicida (strain LFI1238)).